We begin with the raw amino-acid sequence, 1058 residues long: UPF0507 protein YALI0E18612g (1058 aa).

The region spanning 252–394 is the VPS9 domain; that stretch reads TNEDGPLDQA…IGENREQLEA (143 aa).

Belongs to the UPF0507 family.

The protein is UPF0507 protein YALI0E18612g of Yarrowia lipolytica (strain CLIB 122 / E 150) (Yeast).